A 122-amino-acid chain; its full sequence is Large ribosomal subunit protein uL14 (122 aa).

The protein belongs to the universal ribosomal protein uL14 family. As to quaternary structure, part of the 50S ribosomal subunit. Forms a cluster with proteins L3 and L19. In the 70S ribosome, L14 and L19 interact and together make contacts with the 16S rRNA in bridges B5 and B8.

Its function is as follows. Binds to 23S rRNA. Forms part of two intersubunit bridges in the 70S ribosome. The chain is Large ribosomal subunit protein uL14 from Bdellovibrio bacteriovorus (strain ATCC 15356 / DSM 50701 / NCIMB 9529 / HD100).